A 749-amino-acid chain; its full sequence is Cytosolic phospholipase A2 (749 aa).

The 124-residue stretch at 1-124 folds into the C2 domain; the sequence is MASIDPYQHI…GEKKQVPFTF (124 aa). Residues 1-178 form a phospholipid binding region; sequence MASIDPYQHI…LRKLLGPEKT (178 aa). 7 residues coordinate Ca(2+): Asp-40, Thr-41, Asp-43, Asn-65, Asp-93, Ala-94, and Asn-95. The PLA2c domain occupies 138-740; sequence VCSSTDLRFS…NDVESRKLHH (603 aa). Ser-229 (nucleophile) is an active-site residue. A disordered region spans residues 428-452; the sequence is HILGNDSSDSDDEMQEPKGTENAKA. Residues 442–452 are compositionally biased toward basic and acidic residues; the sequence is QEPKGTENAKA. Asp-549 serves as the catalytic Proton acceptor. Residues 729–749 are disordered; the sequence is SLNDVESRKLHHKDSQSKFQM. The segment covering 733 to 749 has biased composition (basic and acidic residues); it reads VESRKLHHKDSQSKFQM.

It is found in the cytoplasm. Its subcellular location is the cytoplasmic vesicle. The enzyme catalyses a 1,2-diacyl-sn-glycero-3-phosphocholine + H2O = a 1-acyl-sn-glycero-3-phosphocholine + a fatty acid + H(+). It carries out the reaction a 1-acyl-sn-glycero-3-phosphocholine + H2O = sn-glycerol 3-phosphocholine + a fatty acid + H(+). With respect to regulation, stimulated by agonists such as ATP, EGF, thrombin and bradykinin as well as by cytosolic Ca(2+). Functionally, selectively hydrolyzes arachidonyl phospholipids in the sn-2 position releasing arachidonic acid. Together with its lysophospholipid activity, it is implicated in the initiation of the inflammatory response. This Xenopus laevis (African clawed frog) protein is Cytosolic phospholipase A2 (pla2g4a).